The chain runs to 263 residues: ATP synthase subunit a (263 aa).

5 helical membrane-spanning segments follow: residues 31–51 (LDTL…FYSI), 89–109 (IGSL…MDLI), 133–153 (DPNA…VYTF), 205–225 (LFGN…LPFW), and 235–255 (AIFH…LTIV).

It belongs to the ATPase A chain family. As to quaternary structure, F-type ATPases have 2 components, CF(1) - the catalytic core - and CF(0) - the membrane proton channel. CF(1) has five subunits: alpha(3), beta(3), gamma(1), delta(1), epsilon(1). CF(0) has three main subunits: a(1), b(2) and c(9-12). The alpha and beta chains form an alternating ring which encloses part of the gamma chain. CF(1) is attached to CF(0) by a central stalk formed by the gamma and epsilon chains, while a peripheral stalk is formed by the delta and b chains.

The protein resides in the cell inner membrane. In terms of biological role, key component of the proton channel; it plays a direct role in the translocation of protons across the membrane. This chain is ATP synthase subunit a, found in Dichelobacter nodosus (strain VCS1703A).